The following is a 294-amino-acid chain: NAD kinase (294 aa).

The active-site Proton acceptor is D74. NAD(+) contacts are provided by residues 74–75 (DG), 148–149 (NE), H159, R176, D178, 189–194 (TAYSLS), and Q249.

It belongs to the NAD kinase family. The cofactor is a divalent metal cation.

The protein resides in the cytoplasm. It carries out the reaction NAD(+) + ATP = ADP + NADP(+) + H(+). Functionally, involved in the regulation of the intracellular balance of NAD and NADP, and is a key enzyme in the biosynthesis of NADP. Catalyzes specifically the phosphorylation on 2'-hydroxyl of the adenosine moiety of NAD to yield NADP. This is NAD kinase from Vibrio cholerae serotype O1 (strain ATCC 39541 / Classical Ogawa 395 / O395).